The following is a 121-amino-acid chain: Large ribosomal subunit protein bL12 (121 aa).

The protein belongs to the bacterial ribosomal protein bL12 family. In terms of assembly, homodimer. Part of the ribosomal stalk of the 50S ribosomal subunit. Forms a multimeric L10(L12)X complex, where L10 forms an elongated spine to which 2 to 4 L12 dimers bind in a sequential fashion. Binds GTP-bound translation factors.

Forms part of the ribosomal stalk which helps the ribosome interact with GTP-bound translation factors. Is thus essential for accurate translation. In Pseudomonas savastanoi pv. phaseolicola (strain 1448A / Race 6) (Pseudomonas syringae pv. phaseolicola (strain 1448A / Race 6)), this protein is Large ribosomal subunit protein bL12.